We begin with the raw amino-acid sequence, 380 residues long: Glucose-1-phosphate adenylyltransferase (380 aa).

Alpha-D-glucose 1-phosphate contacts are provided by residues Y100, G165, 180–181 (EK), and S191.

This sequence belongs to the bacterial/plant glucose-1-phosphate adenylyltransferase family. As to quaternary structure, homotetramer.

It carries out the reaction alpha-D-glucose 1-phosphate + ATP + H(+) = ADP-alpha-D-glucose + diphosphate. The protein operates within glycan biosynthesis; glycogen biosynthesis. Functionally, involved in the biosynthesis of ADP-glucose, a building block required for the elongation reactions to produce glycogen. Catalyzes the reaction between ATP and alpha-D-glucose 1-phosphate (G1P) to produce pyrophosphate and ADP-Glc. The protein is Glucose-1-phosphate adenylyltransferase of Clostridium acetobutylicum (strain ATCC 824 / DSM 792 / JCM 1419 / IAM 19013 / LMG 5710 / NBRC 13948 / NRRL B-527 / VKM B-1787 / 2291 / W).